The primary structure comprises 707 residues: Translation initiation factor IF-2 (707 aa).

The span at 55 to 80 shows a compositional bias: basic and acidic residues; sequence LAEKPKEEKQKDQKNHEQEAQDKEEK. A disordered region spans residues 55-88; that stretch reads LAEKPKEEKQKDQKNHEQEAQDKEEKEIEEDSFY. The 170-residue stretch at 209–378 folds into the tr-type G domain; sequence PRPPIVTVMG…LLVAEMEDLK (170 aa). Residues 218–225 form a G1 region; it reads GHVDHGKT. 218–225 is a binding site for GTP; it reads GHVDHGKT. The interval 243-247 is G2; the sequence is GITQH. A G3 region spans residues 264 to 267; sequence DTPG. GTP contacts are provided by residues 264 to 268 and 318 to 321; these read DTPGH and NKID. Residues 318–321 are G4; it reads NKID. Positions 354-356 are G5; the sequence is SAK.

It belongs to the TRAFAC class translation factor GTPase superfamily. Classic translation factor GTPase family. IF-2 subfamily.

It is found in the cytoplasm. In terms of biological role, one of the essential components for the initiation of protein synthesis. Protects formylmethionyl-tRNA from spontaneous hydrolysis and promotes its binding to the 30S ribosomal subunits. Also involved in the hydrolysis of GTP during the formation of the 70S ribosomal complex. The protein is Translation initiation factor IF-2 of Caldanaerobacter subterraneus subsp. tengcongensis (strain DSM 15242 / JCM 11007 / NBRC 100824 / MB4) (Thermoanaerobacter tengcongensis).